The primary structure comprises 607 residues: Glycosyltransferase 25 family member (607 aa).

Residues 1–22 (MKPVSCVGLLVLLVGVLVTVKG) form the signal peptide. Residues N226, N254, N514, and N565 are each glycosylated (N-linked (GlcNAc...) asparagine). Positions 566-607 (DTSDSSAEKKGDKEQLSSKTLMDSTISRDEHELSVANRKSEL) are disordered. 2 stretches are compositionally biased toward basic and acidic residues: residues 571 to 581 (SAEKKGDKEQL) and 591 to 607 (ISRDEHELSVANRKSEL). The Prevents secretion from ER motif lies at 604-607 (KSEL).

It belongs to the glycosyltransferase 25 family.

The protein resides in the endoplasmic reticulum lumen. This Aedes aegypti (Yellowfever mosquito) protein is Glycosyltransferase 25 family member.